Consider the following 834-residue polypeptide: Protein Jade-1 (834 aa).

The interval 1-46 is disordered; sequence MKRGRLPSSSEDSDDNGSLSTTWSQHSRSQHGRSSTCSRPEDRKPS. The span at 24-35 shows a compositional bias: low complexity; that stretch reads SQHSRSQHGRSS. Residues 61-81 are interaction with KAT7/HBO1 and histones; sequence DSYQLNPDDYYVLADPWRQEW. The interval 81–189 is interaction with histones; that stretch reads WEKGVQVPVS…EQRCYDNMNH (109 aa). Ser-90 is subject to Phosphoserine. Thr-93 is modified (phosphothreonine). Lys-115 is covalently cross-linked (Glycyl lysine isopeptide (Lys-Gly) (interchain with G-Cter in SUMO2)). The PHD-type 1 zinc-finger motif lies at 204 to 254; sequence DVVCDVCQSPDGEDGNEMVFCDKCNICVHQACYGILKVPEGSWLCRTCALG. A C2HC pre-PHD-type zinc finger spans residues 256–290; that stretch reads QPKCLLCPKKGGAMKPTRSGTKWVHVSCALWIPEV. A PHD-type 2 zinc finger spans residues 314–370; it reads LVCSLCNEKFGASIQCSVKNCRTAFHVTCAFDRGLEMKTILAENDEVKFKSYCPKHS. The disordered stretch occupies residues 367-409; that stretch reads PKHSSHRKPEEGLGEGAAQENGAPESSPQSPLEPYGSLEPNRE. A Glycyl lysine isopeptide (Lys-Gly) (interchain with G-Cter in SUMO2) cross-link involves residue Lys-573. Disordered regions lie at residues 589-621 and 676-716; these read HPLK…CGRR and DKSF…GTRK. Phosphoserine is present on Ser-603. Lys-609 is modified (N6-acetyllysine). Residues Ser-704 and Ser-735 each carry the phosphoserine modification. Residues 738-819 are disordered; the sequence is KSWGGFRIPK…EKKCIHASST (82 aa). Composition is skewed to basic and acidic residues over residues 747–768 and 777–790; these read KKGE…HSDC and PAKE…RADS.

Belongs to the JADE family. In terms of assembly, component of the HBO1 complex composed at least of ING4 or ING5, KAT7/HBO1, MEAF6, and one of JADE1, JADE2 and JADE3. Interacts with NPHP4. In terms of tissue distribution, highly expressed in kidney. Also present in liver (at protein level).

It localises to the nucleus. Its subcellular location is the chromosome. The protein localises to the cytoplasm. The protein resides in the cytoskeleton. It is found in the cilium basal body. Scaffold subunit of some HBO1 complexes, which have a histone H4 acetyltransferase activity. Plays a key role in HBO1 complex by directing KAT7/HBO1 specificity towards histone H4 acetylation (H4K5ac, H4K8ac and H4K12ac), regulating DNA replication initiation, regulating DNA replication initiation. May also promote acetylation of nucleosomal histone H4 by KAT5. Promotes apoptosis. May act as a renal tumor suppressor. Negatively regulates canonical Wnt signaling; at least in part, cooperates with NPHP4 in this function. This Mus musculus (Mouse) protein is Protein Jade-1 (Jade1).